The following is a 337-amino-acid chain: DNA-directed RNA polymerase subunit alpha (337 aa).

The alpha N-terminal domain (alpha-NTD) stretch occupies residues 1–233; it reads MVREKVTVST…DLFIPFLHIE (233 aa). The alpha C-terminal domain (alpha-CTD) stretch occupies residues 265 to 337; the sequence is KKIALKSIFI…FVIDLAKNEF (73 aa).

It belongs to the RNA polymerase alpha chain family. In terms of assembly, in plastids the minimal PEP RNA polymerase catalytic core is composed of four subunits: alpha, beta, beta', and beta''. When a (nuclear-encoded) sigma factor is associated with the core the holoenzyme is formed, which can initiate transcription.

It is found in the plastid. The protein resides in the chloroplast. The catalysed reaction is RNA(n) + a ribonucleoside 5'-triphosphate = RNA(n+1) + diphosphate. Its function is as follows. DNA-dependent RNA polymerase catalyzes the transcription of DNA into RNA using the four ribonucleoside triphosphates as substrates. This Nicotiana tomentosiformis (Tobacco) protein is DNA-directed RNA polymerase subunit alpha.